Consider the following 692-residue polypeptide: Elongation factor G (692 aa).

In terms of domain architecture, tr-type G spans 9-283 (DKLRNIGIMA…AVIDYLPSPL (275 aa)). Residues 18-25 (AHIDAGKT), 82-86 (DTPGH), and 136-139 (NKMD) contribute to the GTP site.

The protein belongs to the TRAFAC class translation factor GTPase superfamily. Classic translation factor GTPase family. EF-G/EF-2 subfamily.

The protein localises to the cytoplasm. Its function is as follows. Catalyzes the GTP-dependent ribosomal translocation step during translation elongation. During this step, the ribosome changes from the pre-translocational (PRE) to the post-translocational (POST) state as the newly formed A-site-bound peptidyl-tRNA and P-site-bound deacylated tRNA move to the P and E sites, respectively. Catalyzes the coordinated movement of the two tRNA molecules, the mRNA and conformational changes in the ribosome. This Thermotoga maritima (strain ATCC 43589 / DSM 3109 / JCM 10099 / NBRC 100826 / MSB8) protein is Elongation factor G (fusA).